We begin with the raw amino-acid sequence, 167 residues long: Mediator of RNA polymerase II transcription subunit 10 (167 aa).

The tract at residues 53 to 88 (LSTHTKPQPPSQDEEQKEKQDDTPEGSANDPLLRDI) is disordered.

Belongs to the Mediator complex subunit 10 family. As to quaternary structure, component of the Mediator complex.

The protein resides in the nucleus. In terms of biological role, component of the Mediator complex, a coactivator involved in the regulated transcription of nearly all RNA polymerase II-dependent genes. Mediator functions as a bridge to convey information from gene-specific regulatory proteins to the basal RNA polymerase II transcription machinery. Mediator is recruited to promoters by direct interactions with regulatory proteins and serves as a scaffold for the assembly of a functional preinitiation complex with RNA polymerase II and the general transcription factors. The sequence is that of Mediator of RNA polymerase II transcription subunit 10 (nut2) from Neosartorya fischeri (strain ATCC 1020 / DSM 3700 / CBS 544.65 / FGSC A1164 / JCM 1740 / NRRL 181 / WB 181) (Aspergillus fischerianus).